A 132-amino-acid polypeptide reads, in one-letter code: Histone H2B.1 (132 aa).

Residues 1–13 (MSSKASKAPASKA) are compositionally biased toward low complexity. A disordered region spans residues 1 to 40 (MSSKASKAPASKAPAEKKPAAKKTSSSVDASKKRTKTRKE). Lysine 7 is modified (N6-acetyllysine; alternate). Lysine 7 participates in a covalent cross-link: Glycyl lysine isopeptide (Lys-Gly) (interchain with G-Cter in SUMO); alternate. Residue serine 11 is modified to Phosphoserine. Lysine 12 carries the N6-acetyllysine modification. Residue lysine 17 is modified to N6-acetyllysine; alternate. A Glycyl lysine isopeptide (Lys-Gly) (interchain with G-Cter in SUMO); alternate cross-link involves residue lysine 17. Residue lysine 18 forms a Glycyl lysine isopeptide (Lys-Gly) (interchain with G-Cter in SUMO) linkage. Lysine 125 is covalently cross-linked (Glycyl lysine isopeptide (Lys-Gly) (interchain with G-Cter in ubiquitin)).

It belongs to the histone H2B family. As to quaternary structure, the nucleosome is a histone octamer containing two molecules each of H2A, H2B, H3 and H4 assembled in one H3-H4 heterotetramer and two H2A-H2B heterodimers. The octamer wraps approximately 147 bp of DNA. Post-translationally, monoubiquitinated by the UBC2-BRE1 complex to form H2BK123ub1. H2BK123ub1 gives a specific tag for epigenetic transcriptional activation and is also prerequisite for H3K4me and H3K79me formation. H2BK123ub1 also modulates the formation of double-strand breaks during meiosis and is a prerequisite for DNA-damage checkpoint activation. Phosphorylated by STE20 to form H2BS10ph during progression through meiotic prophase. May be correlated with chromosome condensation. In terms of processing, acetylated by GCN5 to form H2BK11ac and H2BK16ac. H2BK16ac can also be formed by ESA1. Acetylation of N-terminal lysines and particularly formation of H2BK11acK16ac has a positive effect on transcription. Post-translationally, sumoylation to form H2BK6su and probably also H2BK16su or H2BK17su, occurs preferentially near the telomeres and represses gene transcription.

The protein localises to the nucleus. Its subcellular location is the chromosome. In terms of biological role, core component of nucleosome. Nucleosomes wrap and compact DNA into chromatin, limiting DNA accessibility to the cellular machineries which require DNA as a template. Histones thereby play a central role in transcription regulation, DNA repair, DNA replication and chromosomal stability. DNA accessibility is regulated via a complex set of post-translational modifications of histones, also called histone code, and nucleosome remodeling. This chain is Histone H2B.1 (HTB1), found in Eremothecium gossypii (strain ATCC 10895 / CBS 109.51 / FGSC 9923 / NRRL Y-1056) (Yeast).